We begin with the raw amino-acid sequence, 257 residues long: VASGYGPPSSHPSSRVVNGEDAVPYSWPWQVSLQYEKNGSFHHTCGGSLIAPDWVVTAGHCISSSLTYQVALGDYNLAVKEGPEQVIPINSGDLFVHPLWNRLCVACGNDIALIKLSRSAQLGDAVQLASLPPAGDILPNETPCYITGWGRLYTNGPLPDKLQRALLPVVDYEHCSKWNWWGSTVKKTMVCAGGDIRSGCNGDSGGPLNCPTDDGGWQVHGVTSFVSSFGCNTQRKPTVFTRVSAFIDWIEETIASH.

The or 3 signal peptide spans Val1 to Ala2. Residues Ser3 to Arg15 constitute a propeptide, activation peptide. Residues Val16–Ala255 form the Peptidase S1 domain. N-linked (GlcNAc...) asparagine glycosylation occurs at Asn38. 2 disulfides stabilise this stretch: Cys45–Cys61 and Cys104–Cys107. The Charge relay system role is filled by His60. Asp110 functions as the Charge relay system in the catalytic mechanism. Disulfide bonds link Cys144-Cys210, Cys175-Cys191, and Cys200-Cys231. Ser204 serves as the catalytic Charge relay system.

It belongs to the peptidase S1 family. Elastase subfamily.

It catalyses the reaction Preferential cleavage: Ala-|-Xaa. Does not hydrolyze elastin.. Functionally, efficient protease with alanine specificity but only little elastolytic activity. This Macaca mulatta (Rhesus macaque) protein is Chymotrypsin-like elastase family member 3B (CELA3B).